Reading from the N-terminus, the 217-residue chain is Endo-1,4-beta-xylanase (217 aa).

Residues 1–17 (MQFLIPVVILCVSLVDS) form the signal peptide. The GH11 domain maps to 20-217 (VLYNNEIGFN…SSGFADITVS (198 aa)). Residues Asn56 and Asn80 are each glycosylated (N-linked (GlcNAc...) asparagine). The Nucleophile role is filled by Glu107. Glu204 functions as the Proton donor in the catalytic mechanism.

The protein belongs to the glycosyl hydrolase 11 (cellulase G) family. As to expression, expressed in larval carcasses and gut, and adult gut.

It localises to the secreted. It catalyses the reaction Endohydrolysis of (1-&gt;4)-beta-D-xylosidic linkages in xylans.. Its pathway is glycan degradation; xylan degradation. This is Endo-1,4-beta-xylanase from Phaedon cochleariae (Mustard beetle).